Consider the following 499-residue polypeptide: Glutathione reductase, cytosolic (499 aa).

Positions 35, 36, 55, 72, 73, and 81 each coordinate FAD. Position 35 (Ser35) interacts with glutathione. A disulfide bridge connects residues Cys73 and Cys78. Residue Tyr130 participates in glutathione binding. Gly146 provides a ligand contact to FAD. NADP(+) contacts are provided by Gly211, Ile214, Glu217, Arg234, Arg240, and Gly297. FAD is bound by residues Asp338 and Thr346. Ala376 is an NADP(+) binding site. His472 is a binding site for FAD. His472 acts as the Proton acceptor in catalysis.

This sequence belongs to the class-I pyridine nucleotide-disulfide oxidoreductase family. In terms of assembly, homodimer. The cofactor is FAD.

The protein resides in the cytoplasm. It catalyses the reaction 2 glutathione + NADP(+) = glutathione disulfide + NADPH + H(+). Catalyzes the reduction of glutathione disulfide (GSSG) to reduced glutathione (GSH). Constitutes the major mechanism to maintain a high GSH:GSSG ratio in the cytosol. The sequence is that of Glutathione reductase, cytosolic from Arabidopsis thaliana (Mouse-ear cress).